The primary structure comprises 192 residues: EF-hand protein 5 (192 aa).

Positions 1–36 (MKDKAPVSSQQDHFSRGGAVGGKPISDVRGTSRPFY) are disordered. 4 consecutive EF-hand domains span residues 46–80 (AELAEGFRVLSNGQKTISIPMKEVSALMASVGLHL), 81–118 (SDEEFHEVMRVFGQGEQTNTEELSFKDFLSLMMCEVDD), 119–154 (TMLEEMRGAFLHYDKQKTGFVTKKQFTELFATGGEC), and 155–190 (STPEEVEELLTIAEQDETDDKIDYNRFINELIHRLN). Ca(2+)-binding residues include T100, E102, D107, D132, and T136.

This chain is EF-hand protein 5, found in Trypanosoma brucei brucei.